The chain runs to 456 residues: Bifunctional protein GlmU (456 aa).

The segment at 1 to 229 is pyrophosphorylase; the sequence is MSNSAMSVVI…LSEVEGVNNR (229 aa). UDP-N-acetyl-alpha-D-glucosamine-binding positions include 11–14, lysine 25, glutamine 76, 81–82, 103–105, glycine 140, glutamate 154, asparagine 169, and asparagine 227; these read LAAG, GT, and YGD. Mg(2+) is bound at residue aspartate 105. A Mg(2+)-binding site is contributed by asparagine 227. The tract at residues 230 to 250 is linker; sequence LQLSALERVYQREQADRLLLA. Positions 251–456 are N-acetyltransferase; sequence GVMLLDPARF…SGWQRPVKKK (206 aa). Positions 333 and 351 each coordinate UDP-N-acetyl-alpha-D-glucosamine. Residue histidine 363 is the Proton acceptor of the active site. Residues tyrosine 366 and asparagine 377 each contribute to the UDP-N-acetyl-alpha-D-glucosamine site. Acetyl-CoA-binding positions include alanine 380, 386–387, serine 405, alanine 423, and arginine 440; that span reads NY.

It in the N-terminal section; belongs to the N-acetylglucosamine-1-phosphate uridyltransferase family. In the C-terminal section; belongs to the transferase hexapeptide repeat family. As to quaternary structure, homotrimer. Requires Mg(2+) as cofactor.

The protein resides in the cytoplasm. It catalyses the reaction alpha-D-glucosamine 1-phosphate + acetyl-CoA = N-acetyl-alpha-D-glucosamine 1-phosphate + CoA + H(+). It carries out the reaction N-acetyl-alpha-D-glucosamine 1-phosphate + UTP + H(+) = UDP-N-acetyl-alpha-D-glucosamine + diphosphate. It functions in the pathway nucleotide-sugar biosynthesis; UDP-N-acetyl-alpha-D-glucosamine biosynthesis; N-acetyl-alpha-D-glucosamine 1-phosphate from alpha-D-glucosamine 6-phosphate (route II): step 2/2. Its pathway is nucleotide-sugar biosynthesis; UDP-N-acetyl-alpha-D-glucosamine biosynthesis; UDP-N-acetyl-alpha-D-glucosamine from N-acetyl-alpha-D-glucosamine 1-phosphate: step 1/1. It participates in bacterial outer membrane biogenesis; LPS lipid A biosynthesis. Catalyzes the last two sequential reactions in the de novo biosynthetic pathway for UDP-N-acetylglucosamine (UDP-GlcNAc). The C-terminal domain catalyzes the transfer of acetyl group from acetyl coenzyme A to glucosamine-1-phosphate (GlcN-1-P) to produce N-acetylglucosamine-1-phosphate (GlcNAc-1-P), which is converted into UDP-GlcNAc by the transfer of uridine 5-monophosphate (from uridine 5-triphosphate), a reaction catalyzed by the N-terminal domain. The sequence is that of Bifunctional protein GlmU from Pectobacterium carotovorum subsp. carotovorum (strain PC1).